The chain runs to 333 residues: 4-hydroxyproline epimerase (333 aa).

Catalysis depends on Cys-90, which acts as the Proton acceptor. Substrate is bound by residues 91–92 (GH) and Asp-249. Cys-253 acts as the Proton donor in catalysis. Residue 254 to 255 (GT) participates in substrate binding.

It belongs to the proline racemase family. As to quaternary structure, homodimer.

It catalyses the reaction trans-4-hydroxy-L-proline = cis-4-hydroxy-D-proline. Its function is as follows. Allows intracellular utilization of 4-hydroxyproline, one of the major constituents of host collagen, by converting 4-hydroxy-L-proline to 4-hydroxy-D-proline, which can be further metabolized by intracellular 4-hydroxy-D-proline oxidases. Strong B-cell mitogen. Plays an important role in the regulation of intra- and extracellular amino acid pools, allowing the bacterium to profit from host precursors and enzymatic pathways. In Brucella abortus (strain S19), this protein is 4-hydroxyproline epimerase.